The primary structure comprises 186 residues: Elongation factor P (186 aa).

Belongs to the elongation factor P family.

The protein localises to the cytoplasm. The protein operates within protein biosynthesis; polypeptide chain elongation. In terms of biological role, involved in peptide bond synthesis. Stimulates efficient translation and peptide-bond synthesis on native or reconstituted 70S ribosomes in vitro. Probably functions indirectly by altering the affinity of the ribosome for aminoacyl-tRNA, thus increasing their reactivity as acceptors for peptidyl transferase. The protein is Elongation factor P of Thiobacillus denitrificans (strain ATCC 25259 / T1).